We begin with the raw amino-acid sequence, 762 residues long: Semaphorin-4A (762 aa).

Residues 1 to 32 (MALPALGLDSWSFLGLFLFQLLLLFLPPATTA) form the signal peptide. The Extracellular portion of the chain corresponds to 33 to 684 (GREGQGPTPR…LAAPKSYWPH (652 aa)). The Sema domain maps to 37-495 (QGPTPRVKYH…FSGGIWKVPR (459 aa)). The cysteines at positions 114 and 125 are disulfide-linked. Residues asparagine 121 and asparagine 136 are each glycosylated (N-linked (GlcNAc...) asparagine). 3 disulfides stabilise this stretch: cysteine 143–cysteine 152, cysteine 270–cysteine 380, and cysteine 294–cysteine 340. N-linked (GlcNAc...) asparagine glycosylation is found at asparagine 314 and asparagine 497. Residues 497 to 544 (NCSVYESCMDCVLARDPHCAWDPESQTCRLLPTPILKSWKQDMQQGNP) enclose the PSI domain. Intrachain disulfides connect cysteine 498–cysteine 515 and cysteine 507–cysteine 524. The region spanning 574 to 632 (NSILELPCPQSSALASYHWSHGVEAIPEAPSTVYNGSLLLLLRDGAGGLYQCWATENDF) is the Ig-like C2-type domain. Asparagine 608 carries N-linked (GlcNAc...) asparagine glycosylation. Residues 685 to 705 (FLTVTVLLALVLSGALVTFLV) traverse the membrane as a helical segment. Topologically, residues 706–762 (SPLGALRARGKVQGCGTLPSREKAPLSSEQCLQPSKEGRTSASDMDADNNLQGTEVA) are cytoplasmic. The tract at residues 722 to 762 (TLPSREKAPLSSEQCLQPSKEGRTSASDMDADNNLQGTEVA) is disordered.

This sequence belongs to the semaphorin family. Interacts with PLXNB1, PLXNB2, PLXNB3, PLXND1 and TIMD2.

The protein resides in the cell membrane. Cell surface receptor for PLXNB1, PLXNB2, PLXNB3 and PLXND1 that plays an important role in cell-cell signaling. Regulates glutamatergic and GABAergic synapse development. Promotes the development of inhibitory synapses in a PLXNB1-dependent manner and promotes the development of excitatory synapses in a PLXNB2-dependent manner. Plays a role in priming antigen-specific T-cells, promotes differentiation of Th1 T-helper cells, and thereby contributes to adaptive immunity. Promotes phosphorylation of TIMD2. Inhibits angiogenesis. Promotes axon growth cone collapse. Inhibits axonal extension by providing local signals to specify territories inaccessible for growing axons. This chain is Semaphorin-4A (SEMA4A), found in Bos taurus (Bovine).